The following is a 189-amino-acid chain: uncharacterized protein (189 aa).

Residues 9–69 form the HTH tetR-type domain; sequence ADTGGRILRA…SMLTSHIAAV (61 aa). Residues 32-51 constitute a DNA-binding region (H-T-H motif); the sequence is TLAEIARRAGVSRPTVYRRW.

This is an uncharacterized protein from Mycobacterium bovis (strain ATCC BAA-935 / AF2122/97).